We begin with the raw amino-acid sequence, 158 residues long: Ribosome-binding factor A (158 aa).

Positions 130–158 are disordered; it reads TAQYAGDADPYKHDDEAEAEGDEFESDEE. Positions 145–158 are enriched in acidic residues; sequence EAEAEGDEFESDEE.

It belongs to the RbfA family. Monomer. Binds 30S ribosomal subunits, but not 50S ribosomal subunits or 70S ribosomes.

The protein resides in the cytoplasm. Its function is as follows. One of several proteins that assist in the late maturation steps of the functional core of the 30S ribosomal subunit. Associates with free 30S ribosomal subunits (but not with 30S subunits that are part of 70S ribosomes or polysomes). Required for efficient processing of 16S rRNA. May interact with the 5'-terminal helix region of 16S rRNA. In Bifidobacterium longum subsp. infantis (strain ATCC 15697 / DSM 20088 / JCM 1222 / NCTC 11817 / S12), this protein is Ribosome-binding factor A.